The chain runs to 364 residues: Mannose-1-phosphate guanyltransferase (364 aa).

It belongs to the transferase hexapeptide repeat family.

The protein localises to the cytoplasm. The catalysed reaction is alpha-D-mannose 1-phosphate + GTP + H(+) = GDP-alpha-D-mannose + diphosphate. It participates in nucleotide-sugar biosynthesis; GDP-alpha-D-mannose biosynthesis; GDP-alpha-D-mannose from alpha-D-mannose 1-phosphate (GTP route): step 1/1. Its function is as follows. Involved in cell wall synthesis where it is required for glycosylation. Involved in cell cycle progression through cell-size checkpoint. The chain is Mannose-1-phosphate guanyltransferase (MPG1) from Gibberella zeae (strain ATCC MYA-4620 / CBS 123657 / FGSC 9075 / NRRL 31084 / PH-1) (Wheat head blight fungus).